A 357-amino-acid chain; its full sequence is UDP-N-acetylglucosamine--N-acetylmuramyl-(pentapeptide) pyrophosphoryl-undecaprenol N-acetylglucosamine transferase (357 aa).

Residues 15–17, Asn124, Arg165, Ser191, and Gln285 each bind UDP-N-acetyl-alpha-D-glucosamine; that span reads TGG.

The protein belongs to the glycosyltransferase 28 family. MurG subfamily.

The protein localises to the cell inner membrane. It catalyses the reaction di-trans,octa-cis-undecaprenyl diphospho-N-acetyl-alpha-D-muramoyl-L-alanyl-D-glutamyl-meso-2,6-diaminopimeloyl-D-alanyl-D-alanine + UDP-N-acetyl-alpha-D-glucosamine = di-trans,octa-cis-undecaprenyl diphospho-[N-acetyl-alpha-D-glucosaminyl-(1-&gt;4)]-N-acetyl-alpha-D-muramoyl-L-alanyl-D-glutamyl-meso-2,6-diaminopimeloyl-D-alanyl-D-alanine + UDP + H(+). Its pathway is cell wall biogenesis; peptidoglycan biosynthesis. Its function is as follows. Cell wall formation. Catalyzes the transfer of a GlcNAc subunit on undecaprenyl-pyrophosphoryl-MurNAc-pentapeptide (lipid intermediate I) to form undecaprenyl-pyrophosphoryl-MurNAc-(pentapeptide)GlcNAc (lipid intermediate II). This is UDP-N-acetylglucosamine--N-acetylmuramyl-(pentapeptide) pyrophosphoryl-undecaprenol N-acetylglucosamine transferase from Microcystis aeruginosa (strain NIES-843 / IAM M-2473).